Reading from the N-terminus, the 204-residue chain is B9 domain-containing protein 1 (204 aa).

The 119-residue stretch at 9 to 127 (FLLMITGQVE…TIPMFVPEST (119 aa)) folds into the C2 B9-type domain.

This sequence belongs to the B9D family. In terms of assembly, part of the tectonic-like complex (also named B9 complex).

It is found in the cytoplasm. The protein localises to the cytoskeleton. The protein resides in the cilium basal body. Its function is as follows. Component of the tectonic-like complex, a complex localized at the transition zone of primary cilia and acting as a barrier that prevents diffusion of transmembrane proteins between the cilia and plasma membranes. Required for ciliogenesis and sonic hedgehog/SHH signaling. The chain is B9 domain-containing protein 1 (B9d1) from Mus musculus (Mouse).